Reading from the N-terminus, the 699-residue chain is Polyribonucleotide nucleotidyltransferase (699 aa).

Residues aspartate 485 and aspartate 491 each contribute to the Mg(2+) site. The KH domain maps to 552-611 (PRITTIKINPEKIRDVIGKGGAVIRALTEETGTTIELEDDGTVKIASSNGDATREAIRRI). One can recognise an S1 motif domain in the interval 621–689 (GRIYNGKVIR…RQGRVRLSIK (69 aa)).

Belongs to the polyribonucleotide nucleotidyltransferase family. Component of the RNA degradosome, which is a multiprotein complex involved in RNA processing and mRNA degradation. It depends on Mg(2+) as a cofactor.

It localises to the cytoplasm. It carries out the reaction RNA(n+1) + phosphate = RNA(n) + a ribonucleoside 5'-diphosphate. Its function is as follows. Involved in mRNA degradation. Catalyzes the phosphorolysis of single-stranded polyribonucleotides processively in the 3'- to 5'-direction. This chain is Polyribonucleotide nucleotidyltransferase, found in Shewanella sp. (strain ANA-3).